We begin with the raw amino-acid sequence, 564 residues long: MGKKYVIGIDYGTESGRAVLVDLEGNEIADHVTPYPHGVIDEVLPESNVQLEPDWALQHPGDYIEVLATAVPAVLQKSGVNPADVIGVGIDFTACTMLPVDASGEPLCLKPEFKHRPHSWVKLWKHHAAQDEANLLNEIAAKRGEAFLPRYGGKISSEWMIAKIWQILNEAPDIYDQTDLFLEATDWVIFKMTGQMVRNSCTAGYKSIWHKQDGYPSKEFFRALDPRLEHLTETKLRGPIVPLGTRAGVLTKEMAAMMGLLPGTAVAVGNVDAHAAVPGVGVVEPGKLVMAMGTSICHMLLGTEEKYVEGMCGVVEDGIIPGYFGYEAGQSAVGDIFAWYVEQGVPAYVKEAAEKEGVSVHEWLEKRAAAYRPGETGLLALDWWNGNRSVLVDTDLTGLIIGYTLLTKPEEVYRALLEATAFGTRKIIDAFVENGVNVDELYACGGLPQKNKLLMQIYADVTNREIKIAASKQTPAVGAAMFAAVAAGKENGGYESIVEAAQNMGKVREETFKPIPENVAIYEQLYQEYTKLHDYFGRGENDVMKRLKHWKETARAAKESMTLS.

The protein belongs to the ribulokinase family.

The enzyme catalyses D-ribulose + ATP = D-ribulose 5-phosphate + ADP + H(+). It catalyses the reaction L-ribulose + ATP = L-ribulose 5-phosphate + ADP + H(+). It participates in carbohydrate degradation; L-arabinose degradation via L-ribulose; D-xylulose 5-phosphate from L-arabinose (bacterial route): step 2/3. In Geobacillus thermodenitrificans (strain NG80-2), this protein is Ribulokinase.